We begin with the raw amino-acid sequence, 284 residues long: Proton-translocating ferredoxin:NAD(+) oxidoreductase complex subunit B (284 aa).

Residues 1–26 (MNTVIMILVVMTIIGLIFGLVLAYVN) form a hydrophobic region. The 4Fe-4S domain occupies 32 to 92 (EVNPLVDLVE…AEQVAKLTGK (61 aa)). Residues cysteine 49, cysteine 52, cysteine 57, cysteine 75, cysteine 138, cysteine 142, cysteine 148, cysteine 152, cysteine 172, cysteine 175, cysteine 178, cysteine 182, cysteine 217, cysteine 220, cysteine 223, cysteine 227, cysteine 246, cysteine 249, cysteine 254, and cysteine 258 each contribute to the [4Fe-4S] cluster site. 4Fe-4S ferredoxin-type domains are found at residues 133-162 (GGPKACKYGCLGFGTCVKSCPFGAMAMGSN), 163-192 (GLPIIDTDICTGCGTCVSACPKQVLGFRPV), 206-237 (GGAVRKACSVGCLGCGLCAKNCPNDAIKVENN), and 239-269 (AVVDQSICASCSEATCLAKCPTGAIKAIVSG).

Belongs to the 4Fe4S bacterial-type ferredoxin family. RnfB subfamily. The complex is composed of six subunits: RnfA, RnfB, RnfC, RnfD, RnfE and RnfG. Requires [4Fe-4S] cluster as cofactor.

Its subcellular location is the cell membrane. Part of a membrane-bound complex that couples electron transfer with translocation of ions across the membrane. Couples electron transfer from reduced ferredoxin to NAD(+) with translocation of H(+) out of the cell. Essential for energy conservation during autotrophic growth. Contributes to ATP synthesis during heterotrophic growth. This Clostridium ljungdahlii (strain ATCC 55383 / DSM 13528 / PETC) protein is Proton-translocating ferredoxin:NAD(+) oxidoreductase complex subunit B.